We begin with the raw amino-acid sequence, 135 residues long: Early nodulin-5 (135 aa).

An N-terminal signal peptide occupies residues 1-23 (MASSSSPIFLMIIFSMWLLFSYS).

In terms of tissue distribution, invasion zone and early symbiotic zone.

Functionally, involved in the infection process during the plant-rhizobium interaction. The sequence is that of Early nodulin-5 (ENOD5) from Pisum sativum (Garden pea).